The sequence spans 275 residues: MPELPEVETVRRGLETLVLGQEIVAVTLKVPKMVKTDLETFALTLPGQIIQSVGRRGKYLLIDLGQLVLVSHLRMEGKYLLFPDEVPDNKHFHVFFELKNGSTLVYQDVRKFGTFDLIAKSQLSAFFAKRKLGPEPKKETFKLKTFEAALLSSQKPIKPHLLDQTLVAGLGNIYVDEVLWAAKVHPETASSRLNKAEIKRLHDETIRILALGIEKGGSTVRTYRNALGADGTMQDYLQVYGQTGKPCPRCGQAIVKLKVGGRGTHICPKCQKKRP.

P2 acts as the Schiff-base intermediate with DNA in catalysis. Catalysis depends on E3, which acts as the Proton donor. The active-site Proton donor; for beta-elimination activity is the K58. 2 residues coordinate DNA: H91 and R110. Residues Q238–K272 form an FPG-type zinc finger. The active-site Proton donor; for delta-elimination activity is the R262.

It belongs to the FPG family. Monomer. Zn(2+) is required as a cofactor.

The catalysed reaction is Hydrolysis of DNA containing ring-opened 7-methylguanine residues, releasing 2,6-diamino-4-hydroxy-5-(N-methyl)formamidopyrimidine.. The enzyme catalyses 2'-deoxyribonucleotide-(2'-deoxyribose 5'-phosphate)-2'-deoxyribonucleotide-DNA = a 3'-end 2'-deoxyribonucleotide-(2,3-dehydro-2,3-deoxyribose 5'-phosphate)-DNA + a 5'-end 5'-phospho-2'-deoxyribonucleoside-DNA + H(+). Its function is as follows. Involved in base excision repair of DNA damaged by oxidation or by mutagenic agents. Acts as a DNA glycosylase that recognizes and removes damaged bases. Has a preference for oxidized purines, such as 7,8-dihydro-8-oxoguanine (8-oxoG). Has AP (apurinic/apyrimidinic) lyase activity and introduces nicks in the DNA strand. Cleaves the DNA backbone by beta-delta elimination to generate a single-strand break at the site of the removed base with both 3'- and 5'-phosphates. The sequence is that of Formamidopyrimidine-DNA glycosylase from Streptococcus pyogenes serotype M18 (strain MGAS8232).